The primary structure comprises 105 residues: Small ribosomal subunit protein uS10 (105 aa).

Belongs to the universal ribosomal protein uS10 family. Part of the 30S ribosomal subunit.

Functionally, involved in the binding of tRNA to the ribosomes. The polypeptide is Small ribosomal subunit protein uS10 (Rickettsia typhi (strain ATCC VR-144 / Wilmington)).